The following is a 212-amino-acid chain: Thiamine-phosphate synthase (212 aa).

38–42 (QLREK) lines the 4-amino-2-methyl-5-(diphosphooxymethyl)pyrimidine pocket. Residues Asp71 and Asp90 each contribute to the Mg(2+) site. Lys138 provides a ligand contact to 4-amino-2-methyl-5-(diphosphooxymethyl)pyrimidine. Residue Gly166 participates in 2-[(2R,5Z)-2-carboxy-4-methylthiazol-5(2H)-ylidene]ethyl phosphate binding.

The protein belongs to the thiamine-phosphate synthase family. Requires Mg(2+) as cofactor.

The enzyme catalyses 2-[(2R,5Z)-2-carboxy-4-methylthiazol-5(2H)-ylidene]ethyl phosphate + 4-amino-2-methyl-5-(diphosphooxymethyl)pyrimidine + 2 H(+) = thiamine phosphate + CO2 + diphosphate. The catalysed reaction is 2-(2-carboxy-4-methylthiazol-5-yl)ethyl phosphate + 4-amino-2-methyl-5-(diphosphooxymethyl)pyrimidine + 2 H(+) = thiamine phosphate + CO2 + diphosphate. It catalyses the reaction 4-methyl-5-(2-phosphooxyethyl)-thiazole + 4-amino-2-methyl-5-(diphosphooxymethyl)pyrimidine + H(+) = thiamine phosphate + diphosphate. It participates in cofactor biosynthesis; thiamine diphosphate biosynthesis; thiamine phosphate from 4-amino-2-methyl-5-diphosphomethylpyrimidine and 4-methyl-5-(2-phosphoethyl)-thiazole: step 1/1. Condenses 4-methyl-5-(beta-hydroxyethyl)thiazole monophosphate (THZ-P) and 2-methyl-4-amino-5-hydroxymethyl pyrimidine pyrophosphate (HMP-PP) to form thiamine monophosphate (TMP). The protein is Thiamine-phosphate synthase of Chlamydia caviae (strain ATCC VR-813 / DSM 19441 / 03DC25 / GPIC) (Chlamydophila caviae).